Reading from the N-terminus, the 782-residue chain is E3 ubiquitin-protein ligase SopA (782 aa).

Residue Cys753 is the Glycyl thioester intermediate of the active site.

The protein belongs to the SopA E3 ligase family. Ubiquitinated in the presence of host E1 ubiquitin-activating enzyme, E2 ubiquitin-conjugating enzyme and ubiquitin.

It is found in the secreted. The protein localises to the host cell. The enzyme catalyses S-ubiquitinyl-[E2 ubiquitin-conjugating enzyme]-L-cysteine + [acceptor protein]-L-lysine = [E2 ubiquitin-conjugating enzyme]-L-cysteine + N(6)-ubiquitinyl-[acceptor protein]-L-lysine.. In terms of biological role, effector proteins function to alter host cell physiology and promote bacterial survival in host tissues. This protein is an E3 ubiquitin ligase that interferes with host's ubiquitination pathway. The sequence is that of E3 ubiquitin-protein ligase SopA (sopA) from Salmonella choleraesuis (strain SC-B67).